We begin with the raw amino-acid sequence, 401 residues long: S-adenosylmethionine synthase (401 aa).

135 to 140 (GHGSGD) contacts ATP.

The protein belongs to the AdoMet synthase 2 family. Mg(2+) serves as cofactor.

The enzyme catalyses L-methionine + ATP + H2O = S-adenosyl-L-methionine + phosphate + diphosphate. Its pathway is amino-acid biosynthesis; S-adenosyl-L-methionine biosynthesis; S-adenosyl-L-methionine from L-methionine: step 1/1. In terms of biological role, catalyzes the formation of S-adenosylmethionine from methionine and ATP. This chain is S-adenosylmethionine synthase (mat), found in Methanothermobacter marburgensis (strain ATCC BAA-927 / DSM 2133 / JCM 14651 / NBRC 100331 / OCM 82 / Marburg) (Methanobacterium thermoautotrophicum).